Here is a 411-residue protein sequence, read N- to C-terminus: Glutamate dehydrogenase 2 (411 aa).

The active site involves K102.

This sequence belongs to the Glu/Leu/Phe/Val dehydrogenases family.

The protein resides in the mitochondrion. The enzyme catalyses L-glutamate + NAD(+) + H2O = 2-oxoglutarate + NH4(+) + NADH + H(+). The catalysed reaction is L-glutamate + NADP(+) + H2O = 2-oxoglutarate + NH4(+) + NADPH + H(+). The sequence is that of Glutamate dehydrogenase 2 (GDH2) from Arabidopsis thaliana (Mouse-ear cress).